The sequence spans 63 residues: Conotoxin Pu5.4 (63 aa).

An N-terminal signal peptide occupies residues 1–22 (MRCVPVFVILLLLIASTPSVDA). Positions 23–50 (TQKTKDDMSLASFHDNAKRFLQTLRNTR) are excised as a propeptide. Trp62 is modified (tryptophan amide).

The protein belongs to the conotoxin T superfamily. Post-translationally, contains 2 disulfide bonds that can be either 'C1-C3, C2-C4' or 'C1-C4, C2-C3', since these disulfide connectivities have been observed for conotoxins with cysteine framework V (for examples, see AC P0DQQ7 and AC P81755). Expressed by the venom duct.

It localises to the secreted. This chain is Conotoxin Pu5.4, found in Conus pulicarius (Flea-bitten cone).